Reading from the N-terminus, the 350-residue chain is Quinone oxidoreductase-like protein 2 (350 aa).

Lys-36 carries the N6-acetyllysine modification. An N6-succinyllysine modification is found at Lys-201. N6-acetyllysine is present on residues Lys-302 and Lys-328.

It belongs to the zinc-containing alcohol dehydrogenase family. Quinone oxidoreductase subfamily.

The protein is Quinone oxidoreductase-like protein 2 of Mus musculus (Mouse).